The following is a 549-amino-acid chain: Oxygen-dependent choline dehydrogenase (549 aa).

4-33 (DFVIIGSGSAGSAMAYRLSEDGRYSVIVIE) contributes to the FAD binding site. The active-site Proton acceptor is histidine 465.

Belongs to the GMC oxidoreductase family. It depends on FAD as a cofactor.

It catalyses the reaction choline + A = betaine aldehyde + AH2. The catalysed reaction is betaine aldehyde + NAD(+) + H2O = glycine betaine + NADH + 2 H(+). The protein operates within amine and polyamine biosynthesis; betaine biosynthesis via choline pathway; betaine aldehyde from choline (cytochrome c reductase route): step 1/1. Involved in the biosynthesis of the osmoprotectant glycine betaine. Catalyzes the oxidation of choline to betaine aldehyde and betaine aldehyde to glycine betaine at the same rate. This chain is Oxygen-dependent choline dehydrogenase, found in Brucella anthropi (strain ATCC 49188 / DSM 6882 / CCUG 24695 / JCM 21032 / LMG 3331 / NBRC 15819 / NCTC 12168 / Alc 37) (Ochrobactrum anthropi).